Consider the following 221-residue polypeptide: Peptide methionine sulfoxide reductase MsrA (221 aa).

The active site involves C54.

Belongs to the MsrA Met sulfoxide reductase family.

The catalysed reaction is L-methionyl-[protein] + [thioredoxin]-disulfide + H2O = L-methionyl-(S)-S-oxide-[protein] + [thioredoxin]-dithiol. It catalyses the reaction [thioredoxin]-disulfide + L-methionine + H2O = L-methionine (S)-S-oxide + [thioredoxin]-dithiol. In terms of biological role, has an important function as a repair enzyme for proteins that have been inactivated by oxidation. Catalyzes the reversible oxidation-reduction of methionine sulfoxide in proteins to methionine. This Methylobacterium nodulans (strain LMG 21967 / CNCM I-2342 / ORS 2060) protein is Peptide methionine sulfoxide reductase MsrA.